Reading from the N-terminus, the 171-residue chain is 3-hydroxydecanoyl-[acyl-carrier-protein] dehydratase (171 aa).

The active site involves histidine 70.

This sequence belongs to the thioester dehydratase family. FabA subfamily. Homodimer.

It localises to the cytoplasm. It catalyses the reaction a (3R)-hydroxyacyl-[ACP] = a (2E)-enoyl-[ACP] + H2O. The catalysed reaction is (3R)-hydroxydecanoyl-[ACP] = (2E)-decenoyl-[ACP] + H2O. The enzyme catalyses (2E)-decenoyl-[ACP] = (3Z)-decenoyl-[ACP]. Its pathway is lipid metabolism; fatty acid biosynthesis. Its function is as follows. Necessary for the introduction of cis unsaturation into fatty acids. Catalyzes the dehydration of (3R)-3-hydroxydecanoyl-ACP to E-(2)-decenoyl-ACP and then its isomerization to Z-(3)-decenoyl-ACP. Can catalyze the dehydratase reaction for beta-hydroxyacyl-ACPs with saturated chain lengths up to 16:0, being most active on intermediate chain length. The protein is 3-hydroxydecanoyl-[acyl-carrier-protein] dehydratase of Chromohalobacter salexigens (strain ATCC BAA-138 / DSM 3043 / CIP 106854 / NCIMB 13768 / 1H11).